Reading from the N-terminus, the 275-residue chain is 6-deoxy-6-sulfo-D-fructose transketolase subunit SqwG (275 aa).

Belongs to the transketolase family. In terms of assembly, forms a complex with SqwH. The cofactor is thiamine diphosphate.

The enzyme catalyses 6-deoxy-6-sulfo-D-fructose + D-glyceraldehyde 3-phosphate = 4-deoxy-4-sulfo-D-erythrose + D-xylulose 5-phosphate. The catalysed reaction is 4-deoxy-4-sulfo-D-erythrulose + D-glyceraldehyde 3-phosphate = sulfoacetaldehyde + D-xylulose 5-phosphate. In terms of biological role, part of the sulfo-TK pathway, a D-sulfoquinovose degradation pathway that produces 2-hydroxyethane-1-sulfonate (isethionate). Catalyzes two steps of the pathway: the formation of 4-deoxy-4-sulfoerythrose (SE) and xylulose 5-phosphate from 6-deoxy-6-sulfo-D-fructose (SF) and glyceraldehyde 3-phosphate, and the formation of sulfoacetaldehyde (SA) and xylulose 5-phosphate from 4-deoxy-4-sulfo-D-erythrulose (SEu) and glyceraldehyde 3-phosphate. The polypeptide is 6-deoxy-6-sulfo-D-fructose transketolase subunit SqwG (Clostridium sp. (strain MSTE9)).